Here is a 342-residue protein sequence, read N- to C-terminus: Tetraacyldisaccharide 4'-kinase (342 aa).

T68–T75 is an ATP binding site.

This sequence belongs to the LpxK family.

The enzyme catalyses a lipid A disaccharide + ATP = a lipid IVA + ADP + H(+). It functions in the pathway glycolipid biosynthesis; lipid IV(A) biosynthesis; lipid IV(A) from (3R)-3-hydroxytetradecanoyl-[acyl-carrier-protein] and UDP-N-acetyl-alpha-D-glucosamine: step 6/6. In terms of biological role, transfers the gamma-phosphate of ATP to the 4'-position of a tetraacyldisaccharide 1-phosphate intermediate (termed DS-1-P) to form tetraacyldisaccharide 1,4'-bis-phosphate (lipid IVA). This Burkholderia ambifaria (strain MC40-6) protein is Tetraacyldisaccharide 4'-kinase.